We begin with the raw amino-acid sequence, 296 residues long: Tyrosine recombinase XerC (296 aa).

In terms of domain architecture, Core-binding (CB) spans 1–84 (MDKIQETFLY…TLRTFYEFWM (84 aa)). The region spanning 105-286 (YLPQFFYEEE…SNQQLRKVYL (182 aa)) is the Tyr recombinase domain. Catalysis depends on residues Arg145, Lys169, His238, Arg241, and His264. The active-site O-(3'-phospho-DNA)-tyrosine intermediate is Tyr273.

This sequence belongs to the 'phage' integrase family. XerC subfamily. Forms a cyclic heterotetrameric complex composed of two molecules of XerC and two molecules of XerD.

It is found in the cytoplasm. Site-specific tyrosine recombinase, which acts by catalyzing the cutting and rejoining of the recombining DNA molecules. The XerC-XerD complex is essential to convert dimers of the bacterial chromosome into monomers to permit their segregation at cell division. It also contributes to the segregational stability of plasmids. This is Tyrosine recombinase XerC from Staphylococcus epidermidis (strain ATCC 35984 / DSM 28319 / BCRC 17069 / CCUG 31568 / BM 3577 / RP62A).